Here is a 1450-residue protein sequence, read N- to C-terminus: Protein clueless (1450 aa).

2 disordered regions span residues M1–E126 and K266–P287. Over residues N29–P60 the composition is skewed to low complexity. The span at A62–N71 shows a compositional bias: basic residues. S271 is subject to Phosphoserine. The region spanning R425–L667 is the Clu domain. Composition is skewed to basic and acidic residues over residues K725 to A734 and K743 to Q765. Disordered regions lie at residues K725–A775 and P959–T1011. A compositionally biased stretch (basic residues) spans K968 to G983. A compositionally biased stretch (low complexity) spans N984–S1008. TPR repeat units follow at residues A1102–V1135, A1228–Y1261, and G1263–T1296. A disordered region spans residues N1410–S1450. Residues A1417–D1428 show a composition bias toward basic and acidic residues.

It belongs to the CLU family.

It localises to the cytoplasm. Functionally, mRNA-binding protein involved in proper cytoplasmic distribution of mitochondria. This is Protein clueless from Drosophila ananassae (Fruit fly).